The following is a 99-amino-acid chain: Plastocyanin B'/B'' (99 aa).

Residues 1 to 99 (IEVLLGSDDG…AGMVGKVTVN (99 aa)) enclose the Plastocyanin-like domain. Residues histidine 37, cysteine 84, histidine 87, and methionine 92 each coordinate Cu cation.

Belongs to the plastocyanin family. It depends on Cu(2+) as a cofactor.

It is found in the plastid. It localises to the chloroplast thylakoid membrane. Participates in electron transfer between P700 and the cytochrome b6-f complex in photosystem I. In Nicotiana tabacum (Common tobacco), this protein is Plastocyanin B'/B''.